A 396-amino-acid chain; its full sequence is L-lactate dehydrogenase (396 aa).

In terms of domain architecture, FMN hydroxy acid dehydrogenase spans 1–380 (MIISAASDYR…SGDSLVQELG (380 aa)). Residue tyrosine 24 participates in substrate binding. FMN is bound by residues serine 106 and glutamine 127. A substrate-binding site is contributed by tyrosine 129. An FMN-binding site is contributed by threonine 155. Residue arginine 164 coordinates substrate. Lysine 251 is an FMN binding site. Histidine 275 acts as the Proton acceptor in catalysis. A substrate-binding site is contributed by arginine 278. Residue 306-330 (DSGIRNGLDVVRMIALGADTVLLGR) coordinates FMN.

Belongs to the FMN-dependent alpha-hydroxy acid dehydrogenase family. FMN serves as cofactor.

Its subcellular location is the cell inner membrane. The enzyme catalyses (S)-lactate + A = pyruvate + AH2. In terms of biological role, catalyzes the conversion of L-lactate to pyruvate. Is coupled to the respiratory chain. The sequence is that of L-lactate dehydrogenase from Salmonella arizonae (strain ATCC BAA-731 / CDC346-86 / RSK2980).